Here is a 366-residue protein sequence, read N- to C-terminus: 2-oxoglutarate synthase subunit KorA (366 aa).

As to quaternary structure, heterotetramer of the KorA, KorB, KorC and KorD subunits.

It carries out the reaction 2 oxidized [2Fe-2S]-[ferredoxin] + 2-oxoglutarate + CoA = succinyl-CoA + 2 reduced [2Fe-2S]-[ferredoxin] + CO2 + H(+). The protein is 2-oxoglutarate synthase subunit KorA (korA) of Methanocaldococcus jannaschii (strain ATCC 43067 / DSM 2661 / JAL-1 / JCM 10045 / NBRC 100440) (Methanococcus jannaschii).